The primary structure comprises 75 residues: Translational regulator CsrA (75 aa).

Belongs to the CsrA/RsmA family. Homodimer; the beta-strands of each monomer intercalate to form a hydrophobic core, while the alpha-helices form wings that extend away from the core.

It localises to the cytoplasm. Functionally, a translational regulator that binds mRNA to regulate translation initiation and/or mRNA stability. Usually binds in the 5'-UTR at or near the Shine-Dalgarno sequence preventing ribosome-binding, thus repressing translation. Its main target seems to be the major flagellin gene, while its function is anatagonized by FliW. The polypeptide is Translational regulator CsrA (Exiguobacterium sp. (strain ATCC BAA-1283 / AT1b)).